The following is a 454-amino-acid chain: MTNAPPATPKIGFVSLGCPKALVDSEQILTQLRAEGYDTAKSYDGADLVIVNTCGFIDAAVQESLDAIGEALHENGRVIVTGCLGAKKDANGDDIIQKVHPKVLAVTGPHALGEVMDAVHLHMPKPHAPFLDLLPPQGIKLTPKHFAYLKISEGCNHRCSFCIIPSMRGDLVSRPIADVMMEAENLFKAGVKELLVISQDTSAYGVDIKFRMGFWNGKPVKTHMTQLVEALGELAAPYGAWVRLHYVYPYPHVDAIIPMMAEGKILPYLDVPLQHAHPDVLKRMKRPASGEKNIERIQAWRAMCPDLTIRSTFIAGFPGETEAEFEYLLDFLKEAEIDRLGCFAYSPVEGATANDLPNAVPEEVREERRGRVMLLQEEISKKRLQAKVGKTMRVLIDEVNRTGAATARSGADAPEIDGVVYVKAPYEPHIKYKVGEFVDVKITGADAHDLWAEA.

The region spanning 9 to 124 (PKIGFVSLGC…VMDAVHLHMP (116 aa)) is the MTTase N-terminal domain. The [4Fe-4S] cluster site is built by C18, C54, C83, C155, C159, and C162. One can recognise a Radical SAM core domain in the interval 141–382 (LTPKHFAYLK…MLLQEEISKK (242 aa)). The 70-residue stretch at 385–454 (QAKVGKTMRV…ADAHDLWAEA (70 aa)) folds into the TRAM domain.

This sequence belongs to the methylthiotransferase family. RimO subfamily. [4Fe-4S] cluster is required as a cofactor.

Its subcellular location is the cytoplasm. The enzyme catalyses L-aspartate(89)-[ribosomal protein uS12]-hydrogen + (sulfur carrier)-SH + AH2 + 2 S-adenosyl-L-methionine = 3-methylsulfanyl-L-aspartate(89)-[ribosomal protein uS12]-hydrogen + (sulfur carrier)-H + 5'-deoxyadenosine + L-methionine + A + S-adenosyl-L-homocysteine + 2 H(+). Its function is as follows. Catalyzes the methylthiolation of an aspartic acid residue of ribosomal protein uS12. In Herminiimonas arsenicoxydans, this protein is Ribosomal protein uS12 methylthiotransferase RimO.